The chain runs to 137 residues: Sec-independent protein translocase protein TatB (137 aa).

Residues 2–22 form a helical membrane-spanning segment; sequence FANIGWGEMLILVIAGLVILG. Positions 92 to 137 are disordered; it reads FFTGKFDQQNGKPAAGQEKPVTPVNPPVTATPPSESTATPFDSDAT. Residues 122–131 show a composition bias toward low complexity; the sequence is TPPSESTATP.

Belongs to the TatB family. In terms of assembly, the Tat system comprises two distinct complexes: a TatABC complex, containing multiple copies of TatA, TatB and TatC subunits, and a separate TatA complex, containing only TatA subunits. Substrates initially bind to the TatABC complex, which probably triggers association of the separate TatA complex to form the active translocon.

It localises to the cell membrane. Functionally, part of the twin-arginine translocation (Tat) system that transports large folded proteins containing a characteristic twin-arginine motif in their signal peptide across membranes. Together with TatC, TatB is part of a receptor directly interacting with Tat signal peptides. TatB may form an oligomeric binding site that transiently accommodates folded Tat precursor proteins before their translocation. The polypeptide is Sec-independent protein translocase protein TatB (Mycobacterium sp. (strain JLS)).